A 466-amino-acid chain; its full sequence is Catalase ifgD (466 aa).

Residues 1-22 form a disordered region; the sequence is MAPNYAKKCPVMGKAPSSGHSS. H48 is a catalytic residue. Position 337 (Y337) interacts with heme.

The protein belongs to the catalase family. The cofactor is heme.

The protein operates within alkaloid biosynthesis; ergot alkaloid biosynthesis. In terms of biological role, catalase; part of the gene cluster that mediates the biosynthesis of isofumigaclavines, fungal ergot alkaloids. The tryptophan dimethylallyltransferase ifgA catalyzes the first step of ergot alkaloid biosynthesis by condensing dimethylallyl diphosphate (DMAP) and tryptophan to form 4-dimethylallyl-L-tryptophan. The second step is catalyzed by the methyltransferase ifgB that methylates 4-dimethylallyl-L-tryptophan in the presence of S-adenosyl-L-methionine, resulting in the formation of N-methyl-dimethylallyl-L-tryptophan. The catalase ifgD and the FAD-dependent oxidoreductase ifgC then transform N-methyl-dimethylallyl-L-tryptophan to chanoclavine-I which is further oxidized by ifgE in the presence of NAD(+), resulting in the formation of chanoclavine-I aldehyde. The chanoclavine-I aldehyde reductases ifgG and/or fgaOx3 reduce chanoclavine-I aldehyde to dihydrochanoclavine-I aldehyde that spontaneously dehydrates to form 6,8-dimethyl-6,7-didehydroergoline. The festuclavine dehydrogenases ifgF1 and/or ifgF2 then catalyze the reduction of 6,8-dimethyl-6,7-didehydroergoline to form festuclavine. Hydrolysis of festuclavine by a yet undetermined cytochrome P450 monooxygenase (called ifgH) then leads to the formation of isofumigaclavine B which is in turn acetylated by ifgI to isofumigaclavine A. Penicillium roqueforti has interestingly at least two sets of genes for the consumption of chanoclavine-I aldehyde on three different loci, the OYEs ifgG/fgaOx3 and the festuclavine synthase homologs ifgF1/ifgF2. The reason for the duplication of these genes is unclear, probably to ensure the conversion of chanoclavine-I aldehyde by differential gene expression under various environmental conditions. The protein is Catalase ifgD of Penicillium roqueforti (strain FM164).